Here is a 92-residue protein sequence, read N- to C-terminus: Small ribosomal subunit protein uS19 (92 aa).

The protein belongs to the universal ribosomal protein uS19 family.

Its function is as follows. Protein S19 forms a complex with S13 that binds strongly to the 16S ribosomal RNA. The chain is Small ribosomal subunit protein uS19 from Acholeplasma laidlawii (strain PG-8A).